The sequence spans 457 residues: Cysteine--tRNA ligase (457 aa).

C30 provides a ligand contact to Zn(2+). Residues P32 to N42 carry the 'HIGH' region motif. 3 residues coordinate Zn(2+): C221, H246, and E250. The 'KMSKS' region signature appears at K278–S282. K281 lines the ATP pocket.

The protein belongs to the class-I aminoacyl-tRNA synthetase family. Monomer. Zn(2+) serves as cofactor.

It is found in the cytoplasm. The catalysed reaction is tRNA(Cys) + L-cysteine + ATP = L-cysteinyl-tRNA(Cys) + AMP + diphosphate. This chain is Cysteine--tRNA ligase, found in Opitutus terrae (strain DSM 11246 / JCM 15787 / PB90-1).